Here is a 156-residue protein sequence, read N- to C-terminus: ATP synthase subunit b 2 (156 aa).

The helical transmembrane segment at 11 to 31 threads the bilayer; sequence LLAFIFFVWFCMKFVWPPIMG.

The protein belongs to the ATPase B chain family. As to quaternary structure, F-type ATPases have 2 components, F(1) - the catalytic core - and F(0) - the membrane proton channel. F(1) has five subunits: alpha(3), beta(3), gamma(1), delta(1), epsilon(1). F(0) has three main subunits: a(1), b(2) and c(10-14). The alpha and beta chains form an alternating ring which encloses part of the gamma chain. F(1) is attached to F(0) by a central stalk formed by the gamma and epsilon chains, while a peripheral stalk is formed by the delta and b chains.

The protein resides in the cell inner membrane. Functionally, f(1)F(0) ATP synthase produces ATP from ADP in the presence of a proton or sodium gradient. F-type ATPases consist of two structural domains, F(1) containing the extramembraneous catalytic core and F(0) containing the membrane proton channel, linked together by a central stalk and a peripheral stalk. During catalysis, ATP synthesis in the catalytic domain of F(1) is coupled via a rotary mechanism of the central stalk subunits to proton translocation. Component of the F(0) channel, it forms part of the peripheral stalk, linking F(1) to F(0). The polypeptide is ATP synthase subunit b 2 (Pseudoalteromonas atlantica (strain T6c / ATCC BAA-1087)).